The chain runs to 337 residues: tRNA N6-adenosine threonylcarbamoyltransferase (337 aa).

Residues H111 and H115 each contribute to the Fe cation site. Substrate contacts are provided by residues 134 to 138, D167, G180, and N272; that span reads LVSGG. D300 contacts Fe cation.

The protein belongs to the KAE1 / TsaD family. Requires Fe(2+) as cofactor.

The protein resides in the cytoplasm. It catalyses the reaction L-threonylcarbamoyladenylate + adenosine(37) in tRNA = N(6)-L-threonylcarbamoyladenosine(37) in tRNA + AMP + H(+). Functionally, required for the formation of a threonylcarbamoyl group on adenosine at position 37 (t(6)A37) in tRNAs that read codons beginning with adenine. Is involved in the transfer of the threonylcarbamoyl moiety of threonylcarbamoyl-AMP (TC-AMP) to the N6 group of A37, together with TsaE and TsaB. TsaD likely plays a direct catalytic role in this reaction. The polypeptide is tRNA N6-adenosine threonylcarbamoyltransferase (Salmonella schwarzengrund (strain CVM19633)).